We begin with the raw amino-acid sequence, 151 residues long: Transcriptional repressor NrdR (151 aa).

A zinc finger spans residues 3-34; it reads CPYCAYGESKVVDSRSTEDGSSIRRRRECLKC. Positions 49 to 139 constitute an ATP-cone domain; that stretch reads ILVIKKNMSR…VYRQFKDINT (91 aa).

The protein belongs to the NrdR family. Zn(2+) is required as a cofactor.

In terms of biological role, negatively regulates transcription of bacterial ribonucleotide reductase nrd genes and operons by binding to NrdR-boxes. The protein is Transcriptional repressor NrdR of Clostridium botulinum (strain Loch Maree / Type A3).